We begin with the raw amino-acid sequence, 173 residues long: MDYFTLFGLPARYALDRELLATRYQELQRQFHPDRFANQPEREKTLALQQATTINTGYQTLKHPLKRAEYMLSQQGFDLSNEQHTMQDTAFLMQQLELREELDAIEHSSDTEAVLSGFSSRLNKMIKTRREQMEQQLDAAEWLIAADTVRKLRFLDKLQQQVEQLEERLLGDF.

The J domain maps to 2–74 (DYFTLFGLPA…LKRAEYMLSQ (73 aa)).

This sequence belongs to the HscB family. Interacts with HscA and stimulates its ATPase activity. Interacts with IscU.

Its function is as follows. Co-chaperone involved in the maturation of iron-sulfur cluster-containing proteins. Seems to help targeting proteins to be folded toward HscA. The polypeptide is Co-chaperone protein HscB (Xenorhabdus nematophila (strain ATCC 19061 / DSM 3370 / CCUG 14189 / LMG 1036 / NCIMB 9965 / AN6)).